A 256-amino-acid chain; its full sequence is MIKRVNKLVLGISLLFLVISITAGCGMGKEAEIKKSFEKTLSMYPIKNLEDLYDKEGYRDDQFDKNDKGTWIVNSQMAIQNKGEALKIKGMLLKIDRNTRSAKGFYYTNEIKTEKYEVAQDNQKKYPVKMINNKFISTEEVKEENIKKEIENFKFFAQYSNFKDLMNYKDGDISYNPEVPSYSAQYQLTNDDYNVKQLRKRYDIPTNKAPKLLLKGTGNLKGSSVGYKKIEFTFLENKNENIYFTDSLHLKPSEDK.

The signal sequence occupies residues 1–24 (MIKRVNKLVLGISLLFLVISITAG). Cysteine 25 carries N-palmitoyl cysteine lipidation. Residue cysteine 25 is the site of S-diacylglycerol cysteine attachment.

Belongs to the staphylococcal tandem lipoprotein family.

It localises to the cell membrane. This is an uncharacterized protein from Staphylococcus aureus (strain MW2).